Reading from the N-terminus, the 183-residue chain is Adenine phosphoribosyltransferase (183 aa).

This sequence belongs to the purine/pyrimidine phosphoribosyltransferase family. In terms of assembly, homodimer.

Its subcellular location is the cytoplasm. The catalysed reaction is AMP + diphosphate = 5-phospho-alpha-D-ribose 1-diphosphate + adenine. It functions in the pathway purine metabolism; AMP biosynthesis via salvage pathway; AMP from adenine: step 1/1. Functionally, catalyzes a salvage reaction resulting in the formation of AMP, that is energically less costly than de novo synthesis. This is Adenine phosphoribosyltransferase from Salmonella gallinarum (strain 287/91 / NCTC 13346).